The chain runs to 179 residues: Inosine/xanthosine triphosphatase (179 aa).

Threonine 8 to lysine 13 contributes to the substrate binding site. Mg(2+) contacts are provided by aspartate 38 and glutamate 68. A substrate-binding site is contributed by glutamate 68–alanine 69.

It belongs to the YjjX NTPase family. As to quaternary structure, homodimer. It depends on Mg(2+) as a cofactor. The cofactor is Mn(2+).

It carries out the reaction XTP + H2O = XDP + phosphate + H(+). It catalyses the reaction ITP + H2O = IDP + phosphate + H(+). Its function is as follows. Phosphatase that hydrolyzes non-canonical purine nucleotides such as XTP and ITP to their respective diphosphate derivatives. Probably excludes non-canonical purines from DNA/RNA precursor pool, thus preventing their incorporation into DNA/RNA and avoiding chromosomal lesions. The polypeptide is Inosine/xanthosine triphosphatase (Pectobacterium carotovorum subsp. carotovorum (strain PC1)).